We begin with the raw amino-acid sequence, 39 residues long: Osmotin-like protein (39 aa).

The protein belongs to the thaumatin family. Contains intrachain disulfide bonds.

Its function is as follows. May be an important antifungal protein. This chain is Osmotin-like protein, found in Hevea brasiliensis (Para rubber tree).